A 435-amino-acid polypeptide reads, in one-letter code: Chaperone SurA (435 aa).

Residues 1-24 form the signal peptide; it reads MRLRSFAFLGFMLLVAMAPSMASA. PpiC domains lie at 173–274 and 286–385; these read DTAY…KLID and VTEN…ELED.

It is found in the periplasm. It carries out the reaction [protein]-peptidylproline (omega=180) = [protein]-peptidylproline (omega=0). Its function is as follows. Chaperone involved in the correct folding and assembly of outer membrane proteins. Recognizes specific patterns of aromatic residues and the orientation of their side chains, which are found more frequently in integral outer membrane proteins. May act in both early periplasmic and late outer membrane-associated steps of protein maturation. This Chromohalobacter salexigens (strain ATCC BAA-138 / DSM 3043 / CIP 106854 / NCIMB 13768 / 1H11) protein is Chaperone SurA.